A 334-amino-acid polypeptide reads, in one-letter code: Thiamine-binding periplasmic protein (334 aa).

Residues 1–23 (MRLLSLLTFSLFAVIGLAPAAQA) form the signal peptide. Thiamine is bound by residues 64-65 (DG), 166-167 (AT), Trp-202, and 220-223 (YTTS).

The protein belongs to the bacterial solute-binding protein 1 family. The complex is composed of two ATP-binding proteins (ThiQ), two transmembrane proteins (ThiP) and a solute-binding protein (ThiB).

Its subcellular location is the periplasm. In terms of biological role, part of the ABC transporter complex ThiBPQ involved in thiamine import. This Brucella suis biovar 1 (strain 1330) protein is Thiamine-binding periplasmic protein (thiB).